A 138-amino-acid polypeptide reads, in one-letter code: Ribulose bisphosphate carboxylase small subunit (138 aa).

The protein belongs to the RuBisCO small chain family. Heterohexadecamer of 8 large and 8 small subunits.

Its subcellular location is the plastid. It is found in the chloroplast. Its function is as follows. RuBisCO catalyzes two reactions: the carboxylation of D-ribulose 1,5-bisphosphate, the primary event in carbon dioxide fixation, as well as the oxidative fragmentation of the pentose substrate in the photorespiration process. Both reactions occur simultaneously and in competition at the same active site. Although the small subunit is not catalytic it is essential for maximal activity. The polypeptide is Ribulose bisphosphate carboxylase small subunit (Cyanidioschyzon merolae (strain NIES-3377 / 10D) (Unicellular red alga)).